The chain runs to 494 residues: 4-trimethylaminobutyraldehyde dehydrogenase (494 aa).

S2 carries the N-acetylserine; in 4-trimethylaminobutyraldehyde dehydrogenase, N-terminally processed modification. Residue K30 is modified to N6-acetyllysine; alternate. K30 is modified (N6-succinyllysine; alternate). Position 59 is an N6-succinyllysine (K59). NAD(+) is bound by residues K180 and 232 to 236 (GSVPT). The active-site Proton acceptor is the E254. C288 functions as the Nucleophile in the catalytic mechanism. The residue at position 298 (K298) is an N6-acetyllysine. K303 is subject to N6-acetyllysine; alternate. K303 is subject to N6-succinyllysine; alternate. K344 is subject to N6-acetyllysine. An NAD(+)-binding site is contributed by E391.

Belongs to the aldehyde dehydrogenase family. Homotetramer. As to expression, detected in brain (at protein level). High expression in adult liver, skeletal muscle, and kidney. Low levels in heart, pancreas, lung and brain. Expressed in all regions of the brain. Expression levels are variable in the different brain areas, with the highest levels in the spinal cord and the lowest in the occipital pole.

The protein resides in the cytoplasm. It localises to the cytosol. It carries out the reaction 4-(trimethylamino)butanal + NAD(+) + H2O = 4-(trimethylamino)butanoate + NADH + 2 H(+). It catalyses the reaction an aldehyde + NAD(+) + H2O = a carboxylate + NADH + 2 H(+). The catalysed reaction is 4-aminobutanal + NAD(+) + H2O = 4-aminobutanoate + NADH + 2 H(+). The enzyme catalyses formaldehyde + NAD(+) + H2O = formate + NADH + 2 H(+). It carries out the reaction acetaldehyde + NAD(+) + H2O = acetate + NADH + 2 H(+). It catalyses the reaction imidazole-4-acetaldehyde + NAD(+) + H2O = imidazole-4-acetate + NADH + 2 H(+). The catalysed reaction is acrolein + NAD(+) + H2O = acrylate + NADH + 2 H(+). The enzyme catalyses (5-hydroxyindol-3-yl)acetaldehyde + NAD(+) + H2O = (5-hydroxyindol-3-yl)acetate + NADH + 2 H(+). It carries out the reaction 3,4-dihydroxyphenylacetaldehyde + NAD(+) + H2O = 3,4-dihydroxyphenylacetate + NADH + 2 H(+). It catalyses the reaction spermine monoaldehyde + NAD(+) + H2O = N-(2-carboxyethyl)spermidine + NADH + 2 H(+). The catalysed reaction is propanal + NAD(+) + H2O = propanoate + NADH + 2 H(+). The enzyme catalyses butanal + NAD(+) + H2O = butanoate + NADH + 2 H(+). It carries out the reaction pentanal + NAD(+) + H2O = pentanoate + NADH + 2 H(+). It catalyses the reaction hexanal + NAD(+) + H2O = hexanoate + NADH + 2 H(+). The protein operates within amine and polyamine biosynthesis; carnitine biosynthesis. Converts gamma-trimethylaminobutyraldehyde into gamma-butyrobetaine with high efficiency (in vitro). Can catalyze the irreversible oxidation of a broad range of aldehydes to the corresponding acids in an NAD-dependent reaction, but with low efficiency. Catalyzes the oxidation of aldehydes arising from biogenic amines and polyamines. This chain is 4-trimethylaminobutyraldehyde dehydrogenase (ALDH9A1), found in Homo sapiens (Human).